Here is a 337-residue protein sequence, read N- to C-terminus: Mannitol dehydrogenase (337 aa).

C27, H49, C80, C83, C86, C94, and C143 together coordinate Zn(2+).

It belongs to the zinc-containing alcohol dehydrogenase family. It depends on Zn(2+) as a cofactor.

The enzyme catalyses D-mannitol + NAD(+) = D-mannose + NADH + H(+). Its function is as follows. Oxidizes mannitol to mannose. Provides the initial step by which translocated mannitol is committed to central metabolism and, by regulating mannitol pool size, is important in regulating salt tolerance at the cellular level. This is Mannitol dehydrogenase (ELI3) from Petroselinum crispum (Parsley).